The primary structure comprises 234 residues: Endonuclease V (234 aa).

The Mg(2+) site is built by D42 and D108.

The protein belongs to the endonuclease V family. Mg(2+) serves as cofactor.

Its subcellular location is the cytoplasm. It catalyses the reaction Endonucleolytic cleavage at apurinic or apyrimidinic sites to products with a 5'-phosphate.. Functionally, DNA repair enzyme involved in the repair of deaminated bases. Selectively cleaves double-stranded DNA at the second phosphodiester bond 3' to a deoxyinosine leaving behind the intact lesion on the nicked DNA. The protein is Endonuclease V of Geotalea uraniireducens (strain Rf4) (Geobacter uraniireducens).